Consider the following 119-residue polypeptide: Large ribosomal subunit protein bL20 (119 aa).

Belongs to the bacterial ribosomal protein bL20 family.

Functionally, binds directly to 23S ribosomal RNA and is necessary for the in vitro assembly process of the 50S ribosomal subunit. It is not involved in the protein synthesizing functions of that subunit. The chain is Large ribosomal subunit protein bL20 from Shewanella woodyi (strain ATCC 51908 / MS32).